A 186-amino-acid chain; its full sequence is Peptide deformylase (186 aa).

Residues Cys-99 and His-141 each contribute to the Fe cation site. Residue Glu-142 is part of the active site. His-145 is a Fe cation binding site.

This sequence belongs to the polypeptide deformylase family. Fe(2+) serves as cofactor.

The enzyme catalyses N-terminal N-formyl-L-methionyl-[peptide] + H2O = N-terminal L-methionyl-[peptide] + formate. Its function is as follows. Removes the formyl group from the N-terminal Met of newly synthesized proteins. Requires at least a dipeptide for an efficient rate of reaction. N-terminal L-methionine is a prerequisite for activity but the enzyme has broad specificity at other positions. This is Peptide deformylase from Chlamydia pneumoniae (Chlamydophila pneumoniae).